Here is a 557-residue protein sequence, read N- to C-terminus: GMP synthase [glutamine-hydrolyzing] (557 aa).

Positions 13 to 209 (TILTLDFGSQ…AVDICGANPN (197 aa)) constitute a Glutamine amidotransferase type-1 domain. Cys-89 functions as the Nucleophile in the catalytic mechanism. Residues His-183 and Glu-185 contribute to the active site. In terms of domain architecture, GMPS ATP-PPase spans 210–414 (WTMSKFVDQE…LGIAHELVMR (205 aa)). ATP is bound at residue 238 to 244 (SGGVDST). Residues Arg-311, Asp-476, Lys-549, and Glu-555 each contribute to the XMP site.

Homodimer. It depends on Mg(2+) as a cofactor.

Its subcellular location is the cytoplasm. It localises to the cytosol. The catalysed reaction is XMP + L-glutamine + ATP + H2O = GMP + L-glutamate + AMP + diphosphate + 2 H(+). It functions in the pathway purine metabolism; GMP biosynthesis; GMP from XMP (L-Gln route): step 1/1. Its activity is regulated as follows. Inhibited by 6-diazo-5-oxo-l-norleucine (DON) and acivicin (ACI). Functionally, catalyzes the conversion of xanthine monophosphate (XMP) to GMP in the presence of glutamine and ATP through an adenyl-XMP intermediate. This is GMP synthase [glutamine-hydrolyzing] (gua1) from Aspergillus fumigatus (strain ATCC MYA-4609 / CBS 101355 / FGSC A1100 / Af293) (Neosartorya fumigata).